A 556-amino-acid polypeptide reads, in one-letter code: 2-succinyl-5-enolpyruvyl-6-hydroxy-3-cyclohexene-1-carboxylate synthase (556 aa).

This sequence belongs to the TPP enzyme family. MenD subfamily. As to quaternary structure, homodimer. The cofactor is Mg(2+). Mn(2+) serves as cofactor. Requires thiamine diphosphate as cofactor.

The catalysed reaction is isochorismate + 2-oxoglutarate + H(+) = 5-enolpyruvoyl-6-hydroxy-2-succinyl-cyclohex-3-ene-1-carboxylate + CO2. The protein operates within quinol/quinone metabolism; 1,4-dihydroxy-2-naphthoate biosynthesis; 1,4-dihydroxy-2-naphthoate from chorismate: step 2/7. It functions in the pathway quinol/quinone metabolism; menaquinone biosynthesis. Its function is as follows. Catalyzes the thiamine diphosphate-dependent decarboxylation of 2-oxoglutarate and the subsequent addition of the resulting succinic semialdehyde-thiamine pyrophosphate anion to isochorismate to yield 2-succinyl-5-enolpyruvyl-6-hydroxy-3-cyclohexene-1-carboxylate (SEPHCHC). The chain is 2-succinyl-5-enolpyruvyl-6-hydroxy-3-cyclohexene-1-carboxylate synthase from Salmonella heidelberg (strain SL476).